A 319-amino-acid polypeptide reads, in one-letter code: MSPPTVKLNSGYDMPLVGFGLWKVNNDTCADQVYEAIKAGYRLFDGACDYGNEVEAGQGVARAIKEGIVKRSDLFIVSKLWNSFHDGERVEPIARKQLSDWGIDYFDLYIVHFPVSLKYVDPEVRYPPGWENAEGKVELGKATIQETWTAMESLVDKGLARSIGISNFSAQLLLDLLRYARIRPATLQIEHHPYLTQERLVTFAQREGIAVTAYSSFGPLSFLELSVKQAEGAPPLFEHPVIKDIAEKHGKTPAQVLLRWATQRGIAVIPKSNNPARLLQNLDVVGFDLEDGELKAISDLDKGLRFNDPPNYGLPITIF.

Tyrosine 50 acts as the Proton donor in catalysis. Histidine 112 is a binding site for substrate. NAD(+)-binding positions include 166–167 (SN), 215–224 (SSFGPLSFLE), and 271–281 (KSNNPARLLQN).

It belongs to the aldo/keto reductase family.

It catalyses the reaction xylitol + NAD(+) = D-xylose + NADH + H(+). It carries out the reaction xylitol + NADP(+) = D-xylose + NADPH + H(+). Its pathway is carbohydrate metabolism; D-xylose degradation. Functionally, catalyzes the initial reaction in the xylose utilization pathway by reducing D-xylose into xylitol. Xylose is a major component of hemicelluloses such as xylan. Most fungi utilize D-xylose via three enzymatic reactions, xylose reductase (XR), xylitol dehydrogenase (XDH), and xylulokinase, to form xylulose 5-phosphate, which enters pentose phosphate pathway. The polypeptide is Probable NAD(P)H-dependent D-xylose reductase xyl1 (xyl1) (Emericella nidulans (strain FGSC A4 / ATCC 38163 / CBS 112.46 / NRRL 194 / M139) (Aspergillus nidulans)).